The primary structure comprises 166 residues: Probable RNA-binding protein EIF1AD (166 aa).

Positions 5–89 constitute an S1-like domain; that stretch reads TKRKHVVKEV…VKAEISFVLC (85 aa). A Nuclear localization signal motif is present at residues 6–12; the sequence is KRKHVVK. Thr33 is subject to Phosphothreonine. A Nuclear localization signal motif is present at residues 56–65; that stretch reads KYRKNIWIKR. The segment at 114 to 166 is disordered; that stretch reads NNNRNRQTQPELPAEPQLSGEESSSEDDSDLFVNTNRRQYRESEEESEEEEAA. Residues Ser132, Ser136, Ser137, Ser138, Ser156, and Ser160 each carry the phosphoserine modification. Residues 156-166 are compositionally biased toward acidic residues; that stretch reads SEEESEEEEAA.

The protein belongs to the EIF1AD family. Interacts with GAPDH and STAT1.

The protein localises to the nucleus. In terms of biological role, plays a role into cellular response to oxidative stress. Decreases cell proliferation. The protein is Probable RNA-binding protein EIF1AD (EIF1AD) of Pongo abelii (Sumatran orangutan).